The primary structure comprises 79 residues: uncharacterized protein (79 aa).

A run of 2 helical transmembrane segments spans residues 28-48 (CIILSGFAGLCMAYLYYALLA) and 51-71 (VALTEAILGGAILPALFAFTV).

The protein localises to the cell membrane. This is an uncharacterized protein from Methanocaldococcus jannaschii (strain ATCC 43067 / DSM 2661 / JAL-1 / JCM 10045 / NBRC 100440) (Methanococcus jannaschii).